A 344-amino-acid chain; its full sequence is Anthranilate phosphoribosyltransferase (344 aa).

5-phospho-alpha-D-ribose 1-diphosphate-binding positions include glycine 80, 83-84 (GD), threonine 88, 90-93 (NVST), 108-116 (KHGNRSVSS), and serine 120. Glycine 80 is an anthranilate binding site. Mg(2+) is bound at residue serine 92. Asparagine 111 serves as a coordination point for anthranilate. Anthranilate is bound at residue arginine 166. Residues aspartate 225 and glutamate 226 each coordinate Mg(2+).

It belongs to the anthranilate phosphoribosyltransferase family. Homodimer. It depends on Mg(2+) as a cofactor.

It catalyses the reaction N-(5-phospho-beta-D-ribosyl)anthranilate + diphosphate = 5-phospho-alpha-D-ribose 1-diphosphate + anthranilate. It functions in the pathway amino-acid biosynthesis; L-tryptophan biosynthesis; L-tryptophan from chorismate: step 2/5. Catalyzes the transfer of the phosphoribosyl group of 5-phosphorylribose-1-pyrophosphate (PRPP) to anthranilate to yield N-(5'-phosphoribosyl)-anthranilate (PRA). The polypeptide is Anthranilate phosphoribosyltransferase (Legionella pneumophila (strain Paris)).